Here is a 94-residue protein sequence, read N- to C-terminus: Integration host factor subunit beta (94 aa).

It belongs to the bacterial histone-like protein family. In terms of assembly, heterodimer of an alpha and a beta chain.

Functionally, this protein is one of the two subunits of integration host factor, a specific DNA-binding protein that functions in genetic recombination as well as in transcriptional and translational control. In Histophilus somni (strain 129Pt) (Haemophilus somnus), this protein is Integration host factor subunit beta.